The chain runs to 133 residues: CDGSH iron-sulfur domain-containing protein 2 homolog (133 aa).

Residues 1 to 35 (MEPISHLVKSSLPNYLSSLPIPDSVGGWFKLSFKD) are Lumenal-facing. A helical transmembrane segment spans residues 36-58 (WLALIPPTVVVAGIGYTAYLAYC). Residues 59 to 133 (PAAKAICSAK…DNVGPIVIKK (75 aa)) lie on the Cytoplasmic side of the membrane. [2Fe-2S] cluster is bound by residues Cys-100, Cys-102, Cys-111, and His-115.

The protein belongs to the CISD protein family. CISD2 subfamily. The cofactor is [2Fe-2S] cluster.

The protein resides in the endoplasmic reticulum membrane. The protein is CDGSH iron-sulfur domain-containing protein 2 homolog of Drosophila yakuba (Fruit fly).